A 186-amino-acid polypeptide reads, in one-letter code: UPF0301 protein Neut_0448 (186 aa).

This sequence belongs to the UPF0301 (AlgH) family.

The protein is UPF0301 protein Neut_0448 of Nitrosomonas eutropha (strain DSM 101675 / C91 / Nm57).